Here is a 202-residue protein sequence, read N- to C-terminus: MARGPRYKVPKRRRREGKTNYYKRYKMVLSGHPRFVVRKTLKHIIVQIVTAKPEGDITIAAAHSRELYKKYGWMGGLGNTPAAYLTGLLAALRGLKAGIKYAVPDIGLHVPTRGAKVFAAIKAANDVGLKVPVGEEVVPSDDRIRGEHIASWAKMLQEASPEAYERFFSKYISRGFDPTQLPTHFEEVKNRILEEYKDVLGE.

Belongs to the universal ribosomal protein uL18 family. As to quaternary structure, part of the 50S ribosomal subunit. Contacts the 5S and 23S rRNAs.

Functionally, this is one of the proteins that bind and probably mediate the attachment of the 5S RNA into the large ribosomal subunit, where it forms part of the central protuberance. In Staphylothermus marinus (strain ATCC 43588 / DSM 3639 / JCM 9404 / F1), this protein is Large ribosomal subunit protein uL18.